We begin with the raw amino-acid sequence, 395 residues long: Tryptophan synthase beta chain (395 aa).

Lys86 carries the N6-(pyridoxal phosphate)lysine modification.

It belongs to the TrpB family. Tetramer of two alpha and two beta chains. It depends on pyridoxal 5'-phosphate as a cofactor.

It carries out the reaction (1S,2R)-1-C-(indol-3-yl)glycerol 3-phosphate + L-serine = D-glyceraldehyde 3-phosphate + L-tryptophan + H2O. The protein operates within amino-acid biosynthesis; L-tryptophan biosynthesis; L-tryptophan from chorismate: step 5/5. The beta subunit is responsible for the synthesis of L-tryptophan from indole and L-serine. The sequence is that of Tryptophan synthase beta chain from Pseudoalteromonas atlantica (strain T6c / ATCC BAA-1087).